Reading from the N-terminus, the 867-residue chain is Piwi-like protein 1 (867 aa).

Residues methionine 1–glycine 11 are compositionally biased toward basic residues. The interval methionine 1–threonine 70 is disordered. The span at alanine 28–glutamine 44 shows a compositional bias: polar residues. Residues threonine 286–glycine 397 form the PAZ domain. Residues threonine 324 to arginine 326 are required for binding 2'-O-methylated 3'-end of piRNAs. An MID region region spans residues serine 485 to glutamate 621. Residues isoleucine 561 to histidine 853 form the Piwi domain. Residues aspartate 638, glutamate 676, aspartate 708, and histidine 842 contribute to the active site.

The protein belongs to the argonaute family. Piwi subfamily. Mg(2+) serves as cofactor. Post-translationally, methylated on arginine residues; required for the interaction with Tudor domain-containing protein and subsequent localization to the meiotic nuage, also named P granule.

The protein localises to the cytoplasm. Endoribonuclease that plays a central role in postnatal germ cells by repressing transposable elements and preventing their mobilization, which is essential for the germline integrity. Acts via the piRNA metabolic process, which mediates the repression of transposable elements during meiosis by forming complexes composed of piRNAs and Piwi proteins and govern the methylation and subsequent repression of transposons. Directly binds methylated piRNAs, a class of 24 to 30 nucleotide RNAs that are generated by a Dicer-independent mechanism and are primarily derived from transposons and other repeated sequence elements. Strongly prefers a uridine in the first position of their guide (g1U preference, also named 1U-bias). Besides their function in transposable elements repression, piRNAs are probably involved in other processes during meiosis such as translation regulation. Not involved in the piRNA amplification loop, also named ping-pong amplification cycle. Acts as an endoribonuclease that cleaves transposon messenger RNAs. This is Piwi-like protein 1 (PIWIL1) from Gallus gallus (Chicken).